The chain runs to 246 residues: Transcription factor MYB13 (246 aa).

2 HTH myb-type domains span residues 9–61 and 62–116; these read KIGL…INYL and RPDI…KKRL. DNA-binding regions (H-T-H motif) lie at residues 37 to 61 and 89 to 112; these read WRALPKLAGLLRCGKSCRLRWINYL and WSAIAAKLPGRTDNEIKNVWHTHL.

Expressed in roots and flowers. Expressed in shoot apex, axillary buds, at the basis of flowers and branching points of inflorescences.

It is found in the nucleus. Plays a regulatory role in meristem function. Functions as component of a regulatory network controlling the establishment and/or development of the shoot system by the regulation of apical meristem function. May play a role in tolerance to boric acid. This is Transcription factor MYB13 from Arabidopsis thaliana (Mouse-ear cress).